A 45-amino-acid polypeptide reads, in one-letter code: uncharacterized protein (45 aa).

This is an uncharacterized protein from Treponema pallidum (strain Nichols).